Reading from the N-terminus, the 116-residue chain is CDKN2AIP N-terminal-like protein (116 aa).

Residue methionine 1 is modified to N-acetylmethionine. The XRN2-binding (XTBD) domain occupies 24–116 (AEQFRSYSES…RSELMRKHQS (93 aa)).

The protein belongs to the CARF family. In terms of assembly, interacts with XRN2; the interaction is direct.

This is CDKN2AIP N-terminal-like protein (Cdkn2aipnl) from Mus musculus (Mouse).